The sequence spans 167 residues: MTRKTRRLWIVIACLACVGSAAALTLRAFSSNIVFFMAPSQVKANPPSPDRTIRLGGMVMAGSLHRINENGTPVNAFEVTDGQAAVEVHYTGILPDLFREGQSVVALGTVQKDGGFTASEVLAKHDETYMPKEVADELKRTGKWDPRFGKAPDASSWDTMTAKKAGG.

The Cytoplasmic segment spans residues 1–7 (MTRKTRR). A helical; Signal-anchor for type II membrane protein membrane pass occupies residues 8 to 28 (LWIVIACLACVGSAAALTLRA). Topologically, residues 29-167 (FSSNIVFFMA…DTMTAKKAGG (139 aa)) are periplasmic. The heme site is built by His-125 and Tyr-129. Basic and acidic residues predominate over residues 141–150 (TGKWDPRFGK). Residues 141–167 (TGKWDPRFGKAPDASSWDTMTAKKAGG) form a disordered region.

The protein belongs to the CcmE/CycJ family.

It is found in the cell inner membrane. In terms of biological role, heme chaperone required for the biogenesis of c-type cytochromes. Transiently binds heme delivered by CcmC and transfers the heme to apo-cytochromes in a process facilitated by CcmF and CcmH. The sequence is that of Cytochrome c-type biogenesis protein CcmE from Gluconobacter oxydans (strain 621H) (Gluconobacter suboxydans).